Reading from the N-terminus, the 231-residue chain is Large ribosomal subunit protein uL1 (231 aa).

It belongs to the universal ribosomal protein uL1 family. As to quaternary structure, part of the 50S ribosomal subunit.

Its function is as follows. Binds directly to 23S rRNA. The L1 stalk is quite mobile in the ribosome, and is involved in E site tRNA release. Functionally, protein L1 is also a translational repressor protein, it controls the translation of the L11 operon by binding to its mRNA. This chain is Large ribosomal subunit protein uL1, found in Acetivibrio thermocellus (strain ATCC 27405 / DSM 1237 / JCM 9322 / NBRC 103400 / NCIMB 10682 / NRRL B-4536 / VPI 7372) (Clostridium thermocellum).